Here is a 153-residue protein sequence, read N- to C-terminus: uncharacterized protein (153 aa).

The first 19 residues, 1–19 (MRKYIPLVLFIFSWPVLCA), serve as a signal peptide directing secretion. Catalysis depends on residues R46, E54, and R88.

The protein belongs to the thermonuclease family.

This is an uncharacterized protein from Escherichia coli O157:H7.